The primary structure comprises 78 residues: Acyl carrier protein (78 aa).

The 76-residue stretch at 2–77 (SDTAERVKKI…DAVKFIDKAS (76 aa)) folds into the Carrier domain. Ser37 carries the O-(pantetheine 4'-phosphoryl)serine modification.

This sequence belongs to the acyl carrier protein (ACP) family. 4'-phosphopantetheine is transferred from CoA to a specific serine of apo-ACP by AcpS. This modification is essential for activity because fatty acids are bound in thioester linkage to the sulfhydryl of the prosthetic group.

It is found in the cytoplasm. Its pathway is lipid metabolism; fatty acid biosynthesis. Its function is as follows. Carrier of the growing fatty acid chain in fatty acid biosynthesis. This chain is Acyl carrier protein, found in Brucella abortus (strain S19).